The sequence spans 121 residues: Small ribosomal subunit protein uS13 (121 aa).

The tract at residues 93 to 121 is disordered; the sequence is RNLPVRGQRTRTNARTCKGPRKSMNKQFK. Positions 110–121 are enriched in basic residues; that stretch reads KGPRKSMNKQFK.

Belongs to the universal ribosomal protein uS13 family. In terms of assembly, part of the 30S ribosomal subunit. Forms a loose heterodimer with protein S19. Forms two bridges to the 50S subunit in the 70S ribosome.

Its function is as follows. Located at the top of the head of the 30S subunit, it contacts several helices of the 16S rRNA. In the 70S ribosome it contacts the 23S rRNA (bridge B1a) and protein L5 of the 50S subunit (bridge B1b), connecting the 2 subunits; these bridges are implicated in subunit movement. Contacts the tRNAs in the A and P-sites. This chain is Small ribosomal subunit protein uS13, found in Blochmanniella pennsylvanica (strain BPEN).